The following is a 165-amino-acid chain: NADPH-dependent 7-cyano-7-deazaguanine reductase (165 aa).

The tract at residues Met1–Ala24 is disordered. The active-site Thioimide intermediate is Cys56. Asp63 functions as the Proton donor in the catalytic mechanism. Substrate is bound by residues Val78–Ser80 and Met97–Glu98.

It belongs to the GTP cyclohydrolase I family. QueF type 1 subfamily.

Its subcellular location is the cytoplasm. The catalysed reaction is 7-aminomethyl-7-carbaguanine + 2 NADP(+) = 7-cyano-7-deazaguanine + 2 NADPH + 3 H(+). The protein operates within tRNA modification; tRNA-queuosine biosynthesis. Its function is as follows. Catalyzes the NADPH-dependent reduction of 7-cyano-7-deazaguanine (preQ0) to 7-aminomethyl-7-deazaguanine (preQ1). This Nitratidesulfovibrio vulgaris (strain ATCC 29579 / DSM 644 / CCUG 34227 / NCIMB 8303 / VKM B-1760 / Hildenborough) (Desulfovibrio vulgaris) protein is NADPH-dependent 7-cyano-7-deazaguanine reductase.